Reading from the N-terminus, the 263-residue chain is Isoprenyl transferase (263 aa).

D38 is an active-site residue. A Mg(2+)-binding site is contributed by D38. Substrate is bound by residues 39 to 42 (GNRR), H55, and 83 to 85 (STD). The Proton acceptor role is filled by N86. Substrate contacts are provided by residues F87, R89, R212, and 218 to 220 (RLS). E231 contacts Mg(2+).

This sequence belongs to the UPP synthase family. As to quaternary structure, homodimer. Mg(2+) serves as cofactor.

Catalyzes the condensation of isopentenyl diphosphate (IPP) with allylic pyrophosphates generating different type of terpenoids. In Thermus thermophilus (strain ATCC BAA-163 / DSM 7039 / HB27), this protein is Isoprenyl transferase.